The chain runs to 882 residues: ABC transporter H family member 4 (882 aa).

The next 3 membrane-spanning stretches (helical) occupy residues 4-24 (WIKL…ISVF), 35-55 (LLFK…LLPW), and 79-101 (TNGP…YAIL). Positions 384–863 (FSYENKFSSE…NAQVYYKLLG (480 aa)) constitute an ABC transporter domain. 418–425 (GQNRSGKS) contacts ATP. Disordered stretches follow at residues 522 to 617 (FDPD…YSTI), 634 to 669 (SMSQ…NSGV), and 710 to 730 (NSGG…NQRS). Low complexity-rich tracts occupy residues 528–617 (IPPT…YSTI) and 647–667 (NGNN…INNS). The span at 715–724 (DESDDDDEEA) shows a compositional bias: acidic residues.

It belongs to the ABC transporter superfamily. ABCH family.

It localises to the membrane. This Dictyostelium discoideum (Social amoeba) protein is ABC transporter H family member 4 (abcH4).